A 288-amino-acid chain; its full sequence is ATP synthase gamma chain (288 aa).

This sequence belongs to the ATPase gamma chain family. F-type ATPases have 2 components, CF(1) - the catalytic core - and CF(0) - the membrane proton channel. CF(1) has five subunits: alpha(3), beta(3), gamma(1), delta(1), epsilon(1). CF(0) has three main subunits: a, b and c.

The protein resides in the cell membrane. Its function is as follows. Produces ATP from ADP in the presence of a proton gradient across the membrane. The gamma chain is believed to be important in regulating ATPase activity and the flow of protons through the CF(0) complex. The polypeptide is ATP synthase gamma chain (Staphylococcus aureus (strain Mu3 / ATCC 700698)).